Reading from the N-terminus, the 1415-residue chain is DNA-directed RNA polymerase subunit beta' (1415 aa).

Residues Cys72, Cys74, Cys87, and Cys90 each coordinate Zn(2+). Mg(2+) is bound by residues Asp463, Asp465, and Asp467. Positions 811, 885, 892, and 895 each coordinate Zn(2+).

The protein belongs to the RNA polymerase beta' chain family. The RNAP catalytic core consists of 2 alpha, 1 beta, 1 beta' and 1 omega subunit. When a sigma factor is associated with the core the holoenzyme is formed, which can initiate transcription. The cofactor is Mg(2+). Zn(2+) serves as cofactor.

The enzyme catalyses RNA(n) + a ribonucleoside 5'-triphosphate = RNA(n+1) + diphosphate. Its function is as follows. DNA-dependent RNA polymerase catalyzes the transcription of DNA into RNA using the four ribonucleoside triphosphates as substrates. The sequence is that of DNA-directed RNA polymerase subunit beta' from Cereibacter sphaeroides (strain ATCC 17029 / ATH 2.4.9) (Rhodobacter sphaeroides).